A 1461-amino-acid polypeptide reads, in one-letter code: Pleiotropic drug resistance protein 2 (1461 aa).

The region spanning 172–445 is the ABC transporter 1 domain; it reads LGLIHLSPSK…FEYMGFRCPE (274 aa). 205-212 contacts ATP; that stretch reads GPPGSGKT. The 214-residue stretch at 523–736 folds into the ABC transmembrane type-2 1 domain; sequence ELFKSCFTRE…GQNAIAINEF (214 aa). Transmembrane regions (helical) follow at residues 541–561, 577–597, 622–642, 660–680, 685–705, and 771–791; these read FLYIFKTTQITIMATIALTVF, FWGALFFSLINVMFNGMQELA, LPIWVLKIPISLVESAIWIIL, LLAFIGVHQMALSLFRFIAAA, VVANTLGTFTLLMVFILGGFI, and ISIGALFGFSLLFNVLFIAAL. The region spanning 859-1111 is the ABC transporter 2 domain; that stretch reads LAFNHVNYYV…KLVEYFETIP (253 aa). 904 to 911 serves as a coordination point for ATP; sequence GVSGAGKT. The 215-residue stretch at 1184 to 1398 folds into the ABC transmembrane type-2 2 domain; the sequence is TQCKACFWKQ…TIYGIFASQV (215 aa). Helical transmembrane passes span 1203–1223, 1243–1263, 1291–1311, 1321–1341, 1348–1368, 1379–1399, and 1430–1450; these read YNAIRFFMTVIIGILFGVIFW, YAAVMFLGATNASAVQSVVAI, TIYVAIQTFVYSLLLFSMIGY, FYYFIFMCFTYFSMYGMMVVA, IAAIVMSFFLSFWNLFSGFLI, WYYWASPVAWTIYGIFASQVG, and FLLVVVFAHVGWVLLFFFVFA.

The protein belongs to the ABC transporter superfamily. ABCG family. PDR (TC 3.A.1.205) subfamily.

It is found in the membrane. Functionally, may be a general defense protein. In Nicotiana plumbaginifolia (Leadwort-leaved tobacco), this protein is Pleiotropic drug resistance protein 2 (PDR2).